Reading from the N-terminus, the 296-residue chain is 4-hydroxy-tetrahydrodipicolinate synthase (296 aa).

Pyruvate is bound at residue Thr46. The active-site Proton donor/acceptor is the Tyr134. The Schiff-base intermediate with substrate role is filled by Lys162. Residue Ile204 coordinates pyruvate.

The protein belongs to the DapA family. As to quaternary structure, homotetramer; dimer of dimers.

It is found in the cytoplasm. It catalyses the reaction L-aspartate 4-semialdehyde + pyruvate = (2S,4S)-4-hydroxy-2,3,4,5-tetrahydrodipicolinate + H2O + H(+). It participates in amino-acid biosynthesis; L-lysine biosynthesis via DAP pathway; (S)-tetrahydrodipicolinate from L-aspartate: step 3/4. Functionally, catalyzes the condensation of (S)-aspartate-beta-semialdehyde [(S)-ASA] and pyruvate to 4-hydroxy-tetrahydrodipicolinate (HTPA). This Clostridium novyi (strain NT) protein is 4-hydroxy-tetrahydrodipicolinate synthase.